The primary structure comprises 379 residues: UDP-4-amino-4-deoxy-L-arabinose--oxoglutarate aminotransferase (379 aa).

N6-(pyridoxal phosphate)lysine is present on Lys-182.

The protein belongs to the DegT/DnrJ/EryC1 family. ArnB subfamily. As to quaternary structure, homodimer. Pyridoxal 5'-phosphate is required as a cofactor.

The catalysed reaction is UDP-4-amino-4-deoxy-beta-L-arabinose + 2-oxoglutarate = UDP-beta-L-threo-pentopyranos-4-ulose + L-glutamate. It functions in the pathway nucleotide-sugar biosynthesis; UDP-4-deoxy-4-formamido-beta-L-arabinose biosynthesis; UDP-4-deoxy-4-formamido-beta-L-arabinose from UDP-alpha-D-glucuronate: step 2/3. It participates in bacterial outer membrane biogenesis; lipopolysaccharide biosynthesis. Its function is as follows. Catalyzes the conversion of UDP-4-keto-arabinose (UDP-Ara4O) to UDP-4-amino-4-deoxy-L-arabinose (UDP-L-Ara4N). The modified arabinose is attached to lipid A and is required for resistance to polymyxin and cationic antimicrobial peptides. In Shigella flexneri, this protein is UDP-4-amino-4-deoxy-L-arabinose--oxoglutarate aminotransferase.